The following is a 319-amino-acid chain: N-acetyl-D-glucosamine kinase (319 aa).

Thr14 provides a ligand contact to ATP. Residues Asn37 and Asp113 each contribute to the substrate site. Position 135 (Thr135) interacts with ATP. Substrate contacts are provided by residues 153-155 and Asp160; that span reads GWG. ATP is bound at residue Ala220.

Belongs to the eukaryotic-type N-acetylglucosamine kinase family. In terms of assembly, homodimer.

It carries out the reaction N-acetyl-D-glucosamine + ATP = N-acetyl-D-glucosamine 6-phosphate + ADP + H(+). Functionally, converts N-acetylglucosamine (GlcNAc), a major component of complex carbohydrates, into GlcNAc 6-phosphate. Also has ManNAc kinase activity. The protein is N-acetyl-D-glucosamine kinase (nagk) of Dictyostelium discoideum (Social amoeba).